Reading from the N-terminus, the 646-residue chain is A-kinase anchor protein 8-like (646 aa).

The sufficient for activation of CTE-mediated expression stretch occupies residues 1 to 268; it reads MSYTGFVQGS…MRRTWKTWTT (268 aa). R208 is subject to Asymmetric dimethylarginine; alternate. At R208 the chain carries Omega-N-methylarginine; alternate. 3 positions are modified to omega-N-methylarginine: R217, R237, and R247. K257 carries the post-translational modification N6-acetyllysine. The segment at 264 to 381 is disordered; sequence KTWTTADFRT…QDKQKKRQRD (118 aa). Residue T267 is modified to Phosphothreonine. The short motif at 274–279 is the Nuclear localization signal element; it reads KKKKRK. The Nuclear export signal (NES) signature appears at 280–296; it reads QGGSPDEPDSKATRTDC. S283 carries the post-translational modification Phosphoserine. Residues 287–296 are compositionally biased toward basic and acidic residues; sequence PDSKATRTDC. A Phosphothreonine modification is found at T292. A Phosphoserine modification is found at S297. Positions 298–314 are enriched in acidic residues; the sequence is DNSDSDNDEGTEGEATE. Positions 337–349 are enriched in basic and acidic residues; the sequence is EDGREEGKEDPEK. The short motif at 362 to 364 is the Nuclear localization signal element; sequence KRK. 2 consecutive C2H2 AKAP95-type zinc fingers follow at residues 391–413 and 484–507; these read CSLC…SKFH and CAAC…TMDH. Residues 545-646 are disordered; it reads GENPFTDSPE…DDEEGGGGAP (102 aa). S552 carries the phosphoserine modification. Positions 552–563 are enriched in acidic residues; the sequence is SPEEEKEQEEAE. Residues 564 to 586 show a composition bias toward low complexity; it reads GGALDEGAQGEAAGISEGAEGVP. Residues 587-607 are compositionally biased toward pro residues; sequence AQPPVPPEPAPGAVSPPPPPP. Residues 634 to 646 show a composition bias toward acidic residues; the sequence is DVEDDEEGGGGAP.

This sequence belongs to the AKAP95 family. As to quaternary structure, interacts (via N-terminus) with DHX9 (via RGG region). Interacts with TMPO isoform Beta, PRPF40A, RNF43, lamin-B. Interacts with HDAC3; increased during mitosis. Interacts with EBV EBNA-LP. Interacts with HIV-1 reverse transcriptase/ribonuclease H. Phosphorylated on serine or threonine residues possibly by PKA; probably modulating the interaction with TMPO isoform Beta. Ubiquitously expressed. Expressed in the brain cortex (at protein level).

Its subcellular location is the nucleus. The protein resides in the nucleus matrix. It is found in the nucleus speckle. The protein localises to the PML body. It localises to the cytoplasm. Functionally, could play a role in constitutive transport element (CTE)-mediated gene expression by association with DHX9. Increases CTE-dependent nuclear unspliced mRNA export. Proposed to target PRKACA to the nucleus but does not seem to be implicated in the binding of regulatory subunit II of PKA. May be involved in nuclear envelope breakdown and chromatin condensation. May be involved in anchoring nuclear membranes to chromatin in interphase and in releasing membranes from chromating at mitosis. May regulate the initiation phase of DNA replication when associated with TMPO isoform Beta. Required for cell cycle G2/M transition and histone deacetylation during mitosis. In mitotic cells recruits HDAC3 to the vicinity of chromatin leading to deacetylation and subsequent phosphorylation at 'Ser-10' of histone H3; in this function seems to act redundantly with AKAP8. May be involved in regulation of pre-mRNA splicing. Its function is as follows. (Microbial infection) In case of EBV infection, may target PRKACA to EBNA-LP-containing nuclear sites to modulate transcription from specific promoters. In terms of biological role, (Microbial infection) Can synergize with DHX9 to activate the CTE-mediated gene expression of type D retroviruses. (Microbial infection) In case of HIV-1 infection, involved in the DHX9-promoted annealing of host tRNA(Lys3) to viral genomic RNA as a primer in reverse transcription; in vitro negatively regulates DHX9 annealing activity. This is A-kinase anchor protein 8-like (AKAP8L) from Homo sapiens (Human).